Here is a 147-residue protein sequence, read N- to C-terminus: MLDIYERLGTHCHDPVYTTVTLTHEQRDRGRLKLVGENNEEVRVFLERGKPLLVGEFLKSECGKIVQVAGAVEDVAHASCEDWEAFSKACYHLGNRHTKIQIGERWLRIKPDHVLEDMLHMLGLIVTHEEAVFVPESGAYSHGHSHH.

This sequence belongs to the UreE family.

It is found in the cytoplasm. In terms of biological role, involved in urease metallocenter assembly. Binds nickel. Probably functions as a nickel donor during metallocenter assembly. This chain is Urease accessory protein UreE, found in Marinomonas sp. (strain MWYL1).